The chain runs to 513 residues: GMP synthase [glutamine-hydrolyzing] (513 aa).

Residues 8-198 (KIIVLDYGSQ…ALNTCGAKGN (191 aa)) enclose the Glutamine amidotransferase type-1 domain. The active-site Nucleophile is the cysteine 85. Residues histidine 172 and glutamate 174 contribute to the active site. Residues 199-388 (WSMENFIDMQ…LGMPDEIVWR (190 aa)) enclose the GMPS ATP-PPase domain. 226-232 (SGGVDSS) lines the ATP pocket.

In terms of assembly, homodimer.

It carries out the reaction XMP + L-glutamine + ATP + H2O = GMP + L-glutamate + AMP + diphosphate + 2 H(+). It functions in the pathway purine metabolism; GMP biosynthesis; GMP from XMP (L-Gln route): step 1/1. Catalyzes the synthesis of GMP from XMP. The polypeptide is GMP synthase [glutamine-hydrolyzing] (Lactococcus lactis subsp. cremoris (strain SK11)).